The sequence spans 157 residues: MSRRRRAEKRQVLPDPKFGDLVVTKFMNYVMYEGKKAVAENIIYGAFDILEAKRKDQGPLETFHSALDNVAPAIEVRSRRVGGATYQVPVEVRPDRRRALAIRWLVTAARKRGENTMTEKLAGELLDASNNRGTAVKKREDTHKMAEANRAFSHYRW.

Belongs to the universal ribosomal protein uS7 family. As to quaternary structure, part of the 30S ribosomal subunit. Contacts proteins S9 and S11.

One of the primary rRNA binding proteins, it binds directly to 16S rRNA where it nucleates assembly of the head domain of the 30S subunit. Is located at the subunit interface close to the decoding center, probably blocks exit of the E-site tRNA. The polypeptide is Small ribosomal subunit protein uS7 (Caulobacter vibrioides (strain ATCC 19089 / CIP 103742 / CB 15) (Caulobacter crescentus)).